Consider the following 491-residue polypeptide: Probable glycine dehydrogenase (decarboxylating) subunit 2 (491 aa).

Lys-273 bears the N6-(pyridoxal phosphate)lysine mark.

This sequence belongs to the GcvP family. C-terminal subunit subfamily. In terms of assembly, the glycine cleavage system is composed of four proteins: P, T, L and H. In this organism, the P 'protein' is a heterodimer of two subunits. It depends on pyridoxal 5'-phosphate as a cofactor.

The catalysed reaction is N(6)-[(R)-lipoyl]-L-lysyl-[glycine-cleavage complex H protein] + glycine + H(+) = N(6)-[(R)-S(8)-aminomethyldihydrolipoyl]-L-lysyl-[glycine-cleavage complex H protein] + CO2. Its function is as follows. The glycine cleavage system catalyzes the degradation of glycine. The P protein binds the alpha-amino group of glycine through its pyridoxal phosphate cofactor; CO(2) is released and the remaining methylamine moiety is then transferred to the lipoamide cofactor of the H protein. The polypeptide is Probable glycine dehydrogenase (decarboxylating) subunit 2 (Bacillus anthracis (strain A0248)).